The chain runs to 418 residues: Light-independent protochlorophyllide reductase subunit N (418 aa).

Residues cysteine 17, cysteine 42, and cysteine 103 each coordinate [4Fe-4S] cluster.

Belongs to the BchN/ChlN family. In terms of assembly, protochlorophyllide reductase is composed of three subunits; ChlL, ChlN and ChlB. Forms a heterotetramer of two ChlB and two ChlN subunits. [4Fe-4S] cluster is required as a cofactor.

It catalyses the reaction chlorophyllide a + oxidized 2[4Fe-4S]-[ferredoxin] + 2 ADP + 2 phosphate = protochlorophyllide a + reduced 2[4Fe-4S]-[ferredoxin] + 2 ATP + 2 H2O. The protein operates within porphyrin-containing compound metabolism; chlorophyll biosynthesis (light-independent). Its function is as follows. Component of the dark-operative protochlorophyllide reductase (DPOR) that uses Mg-ATP and reduced ferredoxin to reduce ring D of protochlorophyllide (Pchlide) to form chlorophyllide a (Chlide). This reaction is light-independent. The NB-protein (ChlN-ChlB) is the catalytic component of the complex. This chain is Light-independent protochlorophyllide reductase subunit N, found in Prochlorococcus marinus (strain SARG / CCMP1375 / SS120).